The following is a 126-amino-acid chain: MSDLHIPGTQSTPAIQGDWQAGRLSMQGDSYPENSYELFGQVIDWVERFLADGQRPLELDLRLLYLNTSSIKAMMDILDLLEEAHQGGRPVSLRWHYDRRNERVAELAEEFREDCSFPFAIQAHDE.

A Phosphothreonine modification is found at Thr-68.

This is an uncharacterized protein from Pseudomonas aeruginosa (strain UCBPP-PA14).